The chain runs to 211 residues: Probable cobalt-precorrin-7 C(5)-methyltransferase (211 aa).

This sequence belongs to the precorrin methyltransferase family.

The enzyme catalyses Co-precorrin-7 + S-adenosyl-L-methionine = Co-precorrin-8X + S-adenosyl-L-homocysteine + H(+). The protein operates within cofactor biosynthesis; adenosylcobalamin biosynthesis; cob(II)yrinate a,c-diamide from sirohydrochlorin (anaerobic route): step 8/10. In terms of biological role, catalyzes the methylation of C-5 in cobalt-precorrin-7 to form cobalt-precorrin-8. The chain is Probable cobalt-precorrin-7 C(5)-methyltransferase (cbiE) from Methanocaldococcus jannaschii (strain ATCC 43067 / DSM 2661 / JAL-1 / JCM 10045 / NBRC 100440) (Methanococcus jannaschii).